The sequence spans 59 residues: Large ribosomal subunit protein bL32 (59 aa).

The tract at residues 1-59 is disordered; that stretch reads MAVQQNKKSPSKRGMHRSHDHLSAAPLAVEPTTGETHLRHHVSPNGYYRGRKVIKTKND. Basic residues-rich tracts occupy residues 9-19 and 49-59; these read SPSKRGMHRSH and RGRKVIKTKND.

Belongs to the bacterial ribosomal protein bL32 family.

The polypeptide is Large ribosomal subunit protein bL32 (Cupriavidus necator (strain ATCC 17699 / DSM 428 / KCTC 22496 / NCIMB 10442 / H16 / Stanier 337) (Ralstonia eutropha)).